A 418-amino-acid polypeptide reads, in one-letter code: MRALLLISTICLLARALAAEVKKPAAAAAPGTAEKLSPKAATLAERSAGLAFSLYQAMAKDQAVENILLSPVVVASSLGLVSLGGKAATASQAKAVLSAEQLRDDEVHAGLGELLRSLSNSTARNVTWKLGSRLYGPSSVSFAEDFVRSSKQHYNCEHSKINFRDKRSALQSINEWAAQTTDGKLPEVTKDVERTDGALLVNAMFFKPHWDERFHHKMVDNRGFMVTRSYTVGVTMMHRTGLYNYYDDEKEKLQMVEMPLAHKLSSLIIIMPHHVEPLERLEKLLTKEQLKVWMGKMQKKAVAISLPKGVVEVTHDLQKHLAGLGLTEAIDKNKADLSRMSGKKDLYLASVFHATAFEWDTDGNPFDQDIYGREELRSPKLFYADHPFIFLVRDTQSGSLLFIGRLVRPKGDKMRDEL.

Positions 1–18 are cleaved as a signal peptide; the sequence is MRALLLISTICLLARALA. K94 carries the post-translational modification N6-succinyllysine. N-linked (GlcNAc...) asparagine glycans are attached at residues N120 and N125. Phosphoserine is present on S141. K207 carries the N6-acetyllysine modification. The residue at position 296 (K296) is an N6-succinyllysine. K319 carries the post-translational modification N6-acetyllysine. Residues 415–418 carry the Prevents secretion from ER motif; that stretch reads RDEL.

The protein belongs to the serpin family.

The protein localises to the endoplasmic reticulum lumen. In terms of biological role, binds specifically to collagen. Could be involved as a chaperone in the biosynthetic pathway of collagen. The chain is Serpin H1 (SERPINH1) from Bos taurus (Bovine).